A 122-amino-acid chain; its full sequence is Ribosome-binding factor A (122 aa).

The protein belongs to the RbfA family. In terms of assembly, monomer. Binds 30S ribosomal subunits, but not 50S ribosomal subunits or 70S ribosomes.

The protein localises to the cytoplasm. Functionally, one of several proteins that assist in the late maturation steps of the functional core of the 30S ribosomal subunit. Associates with free 30S ribosomal subunits (but not with 30S subunits that are part of 70S ribosomes or polysomes). Required for efficient processing of 16S rRNA. May interact with the 5'-terminal helix region of 16S rRNA. The protein is Ribosome-binding factor A of Burkholderia thailandensis (strain ATCC 700388 / DSM 13276 / CCUG 48851 / CIP 106301 / E264).